Reading from the N-terminus, the 686-residue chain is Probable metal-nicotianamine transporter YSL4 (686 aa).

14 consecutive transmembrane segments (helical) span residues 27 to 47 (WLVT…FCFV), 53 to 73 (MMTG…FFLL), 96 to 116 (MFLI…GFAT), 151 to 171 (FFLI…IMII), 203 to 223 (VMTI…QWFY), 264 to 284 (IVNF…YPYL), 308 to 328 (VFIS…ILVT), 373 to 393 (IPMF…MVAM), 405 to 425 (VGVL…ATGL), 441 to 461 (IFAA…VSGI), 488 to 508 (AMIA…PCIF), 554 to 574 (CVEL…LVLV), 596 to 616 (FFAG…LLLW), and 629 to 649 (AAVA…SALL).

This sequence belongs to the YSL (TC 2.A.67.2) family.

It is found in the membrane. Its function is as follows. May be involved in the transport of nicotianamine-chelated metals. The chain is Probable metal-nicotianamine transporter YSL4 (YSL4) from Oryza sativa subsp. japonica (Rice).